Reading from the N-terminus, the 439-residue chain is Probable aspartic proteinase GIP2 (439 aa).

An N-terminal signal peptide occupies residues 1-23 (MASSCCLHAILLCSLLFITSTTA). The 374-residue stretch at 47–420 (YLTQIQQRTP…DLARSRLGFT (374 aa)) folds into the Peptidase A1 domain. N-linked (GlcNAc...) asparagine glycosylation is found at N116, N280, N323, and N434.

The protein belongs to the peptidase A1 family. As to quaternary structure, interacts with the Phytophtora parasitica xyloglucanase XEG1 and xyloglucanase-like XLP1. Possesses stronger binding affinity with XLP1, a truncated paralog of P.parasitica XEG1 which has no enzyme activity.

Its subcellular location is the secreted. It localises to the extracellular space. It is found in the apoplast. Functionally, involved in plant defense against Phytophtora parasitica. Contributes positively to Nicotiana resistance against P.parasitica. Binds the P.parasitica xyloglucanase XEG1 and inhibits its cell wall degrading enzyme activity and its contribution as P.parasitica virulence factor. XEG1 acts as an important virulence factor during P.parasitica infection but also acts as a pathogen-associated molecular pattern (PAMP) in Nictotiana species, where it can trigger defense responses including cell death. (Microbial infection) Possesses stronger binding affinity with XLP1, a truncated paralog of P.parasitica XEG1 which has no enzyme activity. Is impaired in its inhibitor activity towards the P.parasitica xyloglucanase XEG1 when hijacked by XLP1 binding. The protein is Probable aspartic proteinase GIP2 of Nicotiana benthamiana.